Consider the following 491-residue polypeptide: Aspartyl/glutamyl-tRNA(Asn/Gln) amidotransferase subunit B (491 aa).

The protein belongs to the GatB/GatE family. GatB subfamily. Heterotrimer of A, B and C subunits.

The enzyme catalyses L-glutamyl-tRNA(Gln) + L-glutamine + ATP + H2O = L-glutaminyl-tRNA(Gln) + L-glutamate + ADP + phosphate + H(+). The catalysed reaction is L-aspartyl-tRNA(Asn) + L-glutamine + ATP + H2O = L-asparaginyl-tRNA(Asn) + L-glutamate + ADP + phosphate + 2 H(+). In terms of biological role, allows the formation of correctly charged Asn-tRNA(Asn) or Gln-tRNA(Gln) through the transamidation of misacylated Asp-tRNA(Asn) or Glu-tRNA(Gln) in organisms which lack either or both of asparaginyl-tRNA or glutaminyl-tRNA synthetases. The reaction takes place in the presence of glutamine and ATP through an activated phospho-Asp-tRNA(Asn) or phospho-Glu-tRNA(Gln). The chain is Aspartyl/glutamyl-tRNA(Asn/Gln) amidotransferase subunit B from Trichormus variabilis (strain ATCC 29413 / PCC 7937) (Anabaena variabilis).